The sequence spans 474 residues: Aspartyl/glutamyl-tRNA(Asn/Gln) amidotransferase subunit B (474 aa).

It belongs to the GatB/GatE family. GatB subfamily. As to quaternary structure, heterotrimer of A, B and C subunits.

The enzyme catalyses L-glutamyl-tRNA(Gln) + L-glutamine + ATP + H2O = L-glutaminyl-tRNA(Gln) + L-glutamate + ADP + phosphate + H(+). It carries out the reaction L-aspartyl-tRNA(Asn) + L-glutamine + ATP + H2O = L-asparaginyl-tRNA(Asn) + L-glutamate + ADP + phosphate + 2 H(+). In terms of biological role, allows the formation of correctly charged Asn-tRNA(Asn) or Gln-tRNA(Gln) through the transamidation of misacylated Asp-tRNA(Asn) or Glu-tRNA(Gln) in organisms which lack either or both of asparaginyl-tRNA or glutaminyl-tRNA synthetases. The reaction takes place in the presence of glutamine and ATP through an activated phospho-Asp-tRNA(Asn) or phospho-Glu-tRNA(Gln). The sequence is that of Aspartyl/glutamyl-tRNA(Asn/Gln) amidotransferase subunit B from Wolbachia pipientis wMel.